Reading from the N-terminus, the 279-residue chain is Probable endonuclease 4 (279 aa).

Positions 69, 109, 145, 179, 182, 216, 229, 231, and 261 each coordinate Zn(2+).

It belongs to the AP endonuclease 2 family. The cofactor is Zn(2+).

The catalysed reaction is Endonucleolytic cleavage to 5'-phosphooligonucleotide end-products.. Functionally, endonuclease IV plays a role in DNA repair. It cleaves phosphodiester bonds at apurinic or apyrimidinic (AP) sites, generating a 3'-hydroxyl group and a 5'-terminal sugar phosphate. The chain is Probable endonuclease 4 from Serratia proteamaculans (strain 568).